A 448-amino-acid chain; its full sequence is Tapasin (448 aa).

Positions 1-20 (MKSLSLLLAVALGLATAVSA) are cleaved as a signal peptide. At 21 to 414 (GPAVIECWFV…LSGPSLEDSV (394 aa)) the chain is on the lumenal side. Residues Cys27 and Cys91 are joined by a disulfide bond. Residue Asn253 is glycosylated (N-linked (GlcNAc...) asparagine). Residues 292–399 (PKVSLMPATL…PASGRSAEVT (108 aa)) form the Ig-like C1-type domain. An intrachain disulfide couples Cys315 to Cys382. Residues 415–435 (GLFLSAFLLLGLFKALGWAAV) form a helical membrane-spanning segment. Over 436 to 448 (YLSTCKDSKKKAE) the chain is Cytoplasmic.

Heterodimer with PDIA3; disulfide-linked. Obligatory mediator for the interaction between newly assembled MHC class I molecules, calreticulin, PDIA3 and TAP. Up to 4 MHC class I/tapasin complexes bind to 1 TAP. Interacts with HLA-G-B2M complex; this interaction is required for loading of high affinity peptides. On its own or as part of MHC class I peptide loading complex, interacts with ligand-free MR1 or MR1-B2M complex, providing for stable MR1 pools ready for metabolite antigen processing. Neutrophils, mostly in fully differentiated cells.

Its subcellular location is the endoplasmic reticulum membrane. Functionally, involved in the association of MHC class I with transporter associated with antigen processing (TAP) and in the assembly of MHC class I with peptide (peptide loading). This Homo sapiens (Human) protein is Tapasin.